Consider the following 233-residue polypeptide: 7-cyano-7-deazaguanine synthase (233 aa).

An ATP-binding site is contributed by 8 to 18 (LSGGLDSTTCM). Residues Cys186, Cys194, Cys197, and Cys200 each contribute to the Zn(2+) site.

This sequence belongs to the QueC family. As to quaternary structure, homodimer. It depends on Zn(2+) as a cofactor.

It catalyses the reaction 7-carboxy-7-deazaguanine + NH4(+) + ATP = 7-cyano-7-deazaguanine + ADP + phosphate + H2O + H(+). Its pathway is purine metabolism; 7-cyano-7-deazaguanine biosynthesis. In terms of biological role, catalyzes the ATP-dependent conversion of 7-carboxy-7-deazaguanine (CDG) to 7-cyano-7-deazaguanine (preQ(0)). The chain is 7-cyano-7-deazaguanine synthase from Desulfitobacterium hafniense (strain DSM 10664 / DCB-2).